Reading from the N-terminus, the 370-residue chain is MAKRDYYEVLGVSKTASDDEIKKAYRKLAMKYHPDRNPDNAEAEEKFKEASEAYEILSDSEKRSMYDRMGHNAFEGGFGGAGGGFGGFSAEDIFSQFGDIFGGAFGGGGRQQRQRRGSDLRYVMELTLEEAVKGVKKTITFTAPAPCDVCDGKGSKNPKDVETCKTCHGSGQVRMQQGFFSVQQTCGTCRGQGKIIKNPCHACHGSGVADRQQTLEVTIPAGVDNGDRVRLSGKGEAIRDGQAGDLYVEVVVREHEIFQRDGADLYMDVPVSIADAALGKEIEIPTLEGRVSLKIPEGTQTGKLFRLRGKGVRPVRSSMVGDLLCRIVVETPVNLTSRQRELLKELQASFDGEDSASSPKKKSFFDRLFD.

One can recognise a J domain in the interval 5 to 70 (DYYEVLGVSK…EKRSMYDRMG (66 aa)). The CR-type zinc finger occupies 134–212 (GVKKTITFTA…CHGSGVADRQ (79 aa)). Zn(2+) is bound by residues Cys147, Cys150, Cys164, Cys167, Cys186, Cys189, Cys200, and Cys203. CXXCXGXG motif repeat units follow at residues 147-154 (CDVCDGKG), 164-171 (CKTCHGSG), 186-193 (CGTCRGQG), and 200-207 (CHACHGSG). The segment at 351-370 (DGEDSASSPKKKSFFDRLFD) is disordered.

Belongs to the DnaJ family. In terms of assembly, homodimer. Zn(2+) serves as cofactor.

Its subcellular location is the cytoplasm. Functionally, participates actively in the response to hyperosmotic and heat shock by preventing the aggregation of stress-denatured proteins and by disaggregating proteins, also in an autonomous, DnaK-independent fashion. Unfolded proteins bind initially to DnaJ; upon interaction with the DnaJ-bound protein, DnaK hydrolyzes its bound ATP, resulting in the formation of a stable complex. GrpE releases ADP from DnaK; ATP binding to DnaK triggers the release of the substrate protein, thus completing the reaction cycle. Several rounds of ATP-dependent interactions between DnaJ, DnaK and GrpE are required for fully efficient folding. Also involved, together with DnaK and GrpE, in the DNA replication of plasmids through activation of initiation proteins. This is Chaperone protein DnaJ from Acinetobacter baumannii (strain AB0057).